Reading from the N-terminus, the 255-residue chain is ETS-related transcription factor Elf-5 (255 aa).

A PNT domain is found at 33–119 (YPAFEHQTAC…FILQSIRSQG (87 aa)). A DNA-binding region (ETS) is located at residues 163–244 (SHLWEFVRDL…VDRRLVYKFG (82 aa)).

This sequence belongs to the ETS family.

The protein localises to the nucleus. Functionally, transcriptionally activator that may play a role in regulating the later stages of keratinocytes terminal differentiation. Binds to DNA sequences containing the consensus nucleotide core sequence GGA[AT]. The chain is ETS-related transcription factor Elf-5 (ELF5) from Bos taurus (Bovine).